The primary structure comprises 216 residues: Guanylate kinase (216 aa).

The region spanning 15 to 193 is the Guanylate kinase-like domain; it reads GNLFMVVAPS…ALKQLQNVVH (179 aa). 22-29 lines the ATP pocket; sequence APSGAGKS.

Belongs to the guanylate kinase family.

Its subcellular location is the cytoplasm. The enzyme catalyses GMP + ATP = GDP + ADP. Functionally, essential for recycling GMP and indirectly, cGMP. The chain is Guanylate kinase from Cupriavidus metallidurans (strain ATCC 43123 / DSM 2839 / NBRC 102507 / CH34) (Ralstonia metallidurans).